Consider the following 177-residue polypeptide: DELTA-stichotoxin-Hcr4b (177 aa).

Positions 3 to 12 (ALAGTITLGA) are plays an important role in the hemolytic activity. An N-terminal region region spans residues 11-30 (GASLGFQILDKVLGELGKVS). Serine 54, valine 87, serine 105, proline 107, tyrosine 133, tyrosine 137, and tyrosine 138 together coordinate phosphocholine. The interval 105–120 (SVPFDYNLYSNWWDVK) is trp-rich region, which is important for the binding to lipid membrane.

This sequence belongs to the actinoporin family. Sea anemone subfamily. Octamer or nonamer in membranes. Monomer in the soluble state.

It localises to the secreted. The protein resides in the nematocyst. Its subcellular location is the target cell membrane. In terms of biological role, pore-forming protein that forms cations-selective hydrophilic pores of around 1 nm and causes cardiac stimulation and cytolysis. Pore formation is a multi-step process that involves specific recognition of membrane sphingomyelin (but neither cholesterol nor phosphatidylcholine) using aromatic rich region and adjacent phosphocholine (POC) binding site, firm binding to the membrane (mainly driven by hydrophobic interactions) accompanied by the transfer of the N-terminal region to the lipid-water interface and finally pore formation after oligomerization of monomers. Cytolytic effects include red blood cells hemolysis, platelet aggregation and lysis, cytotoxic and cytostatic effects on fibroblasts. Lethality in mammals has been ascribed to severe vasospasm of coronary vessels, cardiac arrhythmia, and inotropic effects. Preincubation with exogenous sphingomyeline causes complete loss of hemolytic activity. The sequence is that of DELTA-stichotoxin-Hcr4b from Radianthus crispa (Leathery sea anemone).